The primary structure comprises 465 residues: Ribulose bisphosphate carboxylase large chain (465 aa).

The residue at position 4 (Lys4) is an N6,N6,N6-trimethyllysine. Substrate-binding residues include Asn113 and Thr163. Residue Lys165 is the Proton acceptor of the active site. Residue Lys167 coordinates substrate. Mg(2+)-binding residues include Lys191, Asp193, and Glu194. Lys191 carries the post-translational modification N6-carboxylysine. Catalysis depends on His284, which acts as the Proton acceptor. The substrate site is built by Arg285, His317, and Ser369.

It belongs to the RuBisCO large chain family. Type I subfamily. Heterohexadecamer of 8 large chains and 8 small chains; disulfide-linked. The disulfide link is formed within the large subunit homodimers. It depends on Mg(2+) as a cofactor. Post-translationally, the disulfide bond which can form in the large chain dimeric partners within the hexadecamer appears to be associated with oxidative stress and protein turnover.

Its subcellular location is the plastid. It is found in the chloroplast. The catalysed reaction is 2 (2R)-3-phosphoglycerate + 2 H(+) = D-ribulose 1,5-bisphosphate + CO2 + H2O. The enzyme catalyses D-ribulose 1,5-bisphosphate + O2 = 2-phosphoglycolate + (2R)-3-phosphoglycerate + 2 H(+). In terms of biological role, ruBisCO catalyzes two reactions: the carboxylation of D-ribulose 1,5-bisphosphate, the primary event in carbon dioxide fixation, as well as the oxidative fragmentation of the pentose substrate in the photorespiration process. Both reactions occur simultaneously and in competition at the same active site. This Epacris sp protein is Ribulose bisphosphate carboxylase large chain.